The sequence spans 402 residues: Multidrug resistance protein MdtH (402 aa).

Residues 1-12 (MSRVSQARNLGK) lie on the Cytoplasmic side of the membrane. A helical membrane pass occupies residues 13-33 (YFLLIDNMLVVLGFFVVFPLI). The Periplasmic portion of the chain corresponds to 34–98 (SIRFVDQMGW…GFATMGIAHE (65 aa)). Residues 99–116 (PWLLWFSCFLSGLGGTLF) form a helical membrane-spanning segment. Residues 117–138 (DPPRSALVVKLIRPEQRGRFFS) lie on the Cytoplasmic side of the membrane. Residues 139–159 (LLMMQDSAGAVIGALLGSWLL) form a helical membrane-spanning segment. At 160-164 (QYDFR) the chain is on the periplasmic side. A helical membrane pass occupies residues 165–185 (LVCATGAILFILCALFNAWLL). Over 186-213 (PAWKLSTARTPVREGMRRVMSNKRFVTY) the chain is Cytoplasmic. Residues 214 to 234 (VLTLAGYYMLAVQVMLMLPIM) traverse the membrane as a helical segment. At 235–243 (VNDIAGSPA) the chain is on the periplasmic side. The chain crosses the membrane as a helical span at residues 244–264 (AVKWMYAIEACLSLTLLYPIA). Residues 265 to 276 (RWSEKRFRLEHR) are Cytoplasmic-facing. Residues 277 to 297 (LMAGLLVMSLSMLPIGMVGNL) traverse the membrane as a helical segment. The Periplasmic portion of the chain corresponds to 298-299 (QQ). A helical membrane pass occupies residues 300–320 (LFTLICAFYIGSVIAEPARET). At 321–339 (LSASPADARARGSYMGFSR) the chain is on the cytoplasmic side. Residues 340–360 (LGLAIGGAISYIGGGWLFDMG) traverse the membrane as a helical segment. The Periplasmic portion of the chain corresponds to 361 to 367 (KALAQPE). Residues 368–388 (LPWMMLGIIGFITFLALGWQF) form a helical membrane-spanning segment. Residues 389 to 402 (SHKRTPRRMLEPGA) are Cytoplasmic-facing.

Belongs to the major facilitator superfamily. DHA1 family. MdtH (TC 2.A.1.2.21) subfamily.

Its subcellular location is the cell inner membrane. This is Multidrug resistance protein MdtH from Salmonella typhi.